A 455-amino-acid polypeptide reads, in one-letter code: O-acyltransferase pigD (455 aa).

The protein belongs to the trichothecene 3-O-acetyltransferase family.

Its pathway is secondary metabolite biosynthesis. O-acetyltransferase; part of the gene cluster that mediates the biosynthesis of azaphilone pigments (MonAzPs), a complex mixture of compounds with a common azaphilone skeleton very widely used as food colorants. Within the pathway, pigD directly transfers the fatty acyl chain from the beta-ketoacyl-ACP produced by the pigJ-pigK fatty acid synthase (FAS) to the C-4 alcohol. The first step of the pathway is performed by the nrPKS pigA that forms the hexaketide precursor from successive condensations of five malonyl-CoA units, with a simple acetyl-CoA starter unit. The role of esterase pigG is not clear, but it may play at most a supplementary role in the formation of the benzaldehyde produced by the pigA nrPKS. This very reactive benzaldehyde is intercepted by the pigC ketoreductase that to provide the first stable enzyme-free MonAzPs intermediate, 6-(4-hydroxy-2-oxopentyl)-3-methyl-2,4-dioxocyclohexane carbaldehyde, also known as M7PKS-1. The FAD-dependent monooxygenase pigN hydroxylates M7PKS-1 at C-4, which triggers the formation of the pyran ring. PigJ, pigK and pigD are involved in the acetylation of the pyran ring. PigJ and pigK form the two subunits of a dedicated fungal FAS that produces the side chain fatty acyl moiety of MonAzPs and pigD transfers the fatty acyl chain to the C-4 alcohol. PigM and pigO are involved in the elimination of the omega-1 alcohol. PigM acts as an O-acetyltransferase that synthesizes the putative O-11 acetyl intermediate whereas pigO eliminates acetic acid to yield an intermediate with a C10(11) double bond. The dehydration of the C-11 alcohol followed by the reduction of the C6(7) double bond by the NAD(P)H-dependent oxidoreductase pigE increases the electrophilicity of the C-5 ketone of the resulting acyl benzopyran. This in turn sets up the C-5 ketone for an intramolecular Knoevenagel aldol condensation with the C-20 enol of the side chain. This condensation affords the characteristic linear tricyclic carbon skeletons of the yellow pigments that serve as the common precursors for the classical yellow pigments monascin and ankaflavin, orange pigments rubopunctatin and monascorubrin, and red pigments ribropunctamine and monascorubramine. The FAD-dependent oxidoreductase pigF is especially invoved in the biosynthesis of orange and red pigments via desaturation of C6(7). In Monascus ruber (Mold), this protein is O-acyltransferase pigD.